Here is a 449-residue protein sequence, read N- to C-terminus: Tubulin beta-8 chain (449 aa).

The GTP site is built by Q11, E69, S138, G142, T143, G144, N204, and N226. Residue E69 participates in Mg(2+) binding. The disordered stretch occupies residues 428–449 (ATADEEEGYEYEEDEVEVQEEQ). A compositionally biased stretch (acidic residues) spans 429-449 (TADEEEGYEYEEDEVEVQEEQ).

The protein belongs to the tubulin family. As to quaternary structure, dimer of alpha and beta chains. A typical microtubule is a hollow water-filled tube with an outer diameter of 25 nm and an inner diameter of 15 nM. Alpha-beta heterodimers associate head-to-tail to form protofilaments running lengthwise along the microtubule wall with the beta-tubulin subunit facing the microtubule plus end conferring a structural polarity. Microtubules usually have 13 protofilaments but different protofilament numbers can be found in some organisms and specialized cells. Mg(2+) is required as a cofactor.

It is found in the cytoplasm. The protein localises to the cytoskeleton. Tubulin is the major constituent of microtubules, a cylinder consisting of laterally associated linear protofilaments composed of alpha- and beta-tubulin heterodimers. Microtubules grow by the addition of GTP-tubulin dimers to the microtubule end, where a stabilizing cap forms. Below the cap, tubulin dimers are in GDP-bound state, owing to GTPase activity of alpha-tubulin. This is Tubulin beta-8 chain (TUBB8) from Arabidopsis thaliana (Mouse-ear cress).